We begin with the raw amino-acid sequence, 106 residues long: Nucleoid-associated protein MCCL_1934 (106 aa).

A disordered region spans residues 1 to 34; sequence MRGGGNMQQMMKQMQKMQKKMAEEQEKLKEERIE. The span at 7 to 16 shows a compositional bias: low complexity; the sequence is MQQMMKQMQK. Positions 20 to 34 are enriched in basic and acidic residues; it reads KMAEEQEKLKEERIE.

It belongs to the YbaB/EbfC family. Homodimer.

The protein resides in the cytoplasm. It is found in the nucleoid. In terms of biological role, binds to DNA and alters its conformation. May be involved in regulation of gene expression, nucleoid organization and DNA protection. The chain is Nucleoid-associated protein MCCL_1934 from Macrococcus caseolyticus (strain JCSC5402) (Macrococcoides caseolyticum).